Reading from the N-terminus, the 439-residue chain is C4-dicarboxylate transport protein (439 aa).

The next 9 membrane-spanning stretches (helical) occupy residues 10–30 (LYVQ…FYPP), 45–65 (LIKM…IAGM), 77–97 (LALL…LVLV), 145–165 (AFAK…GFAL), 185–205 (VLFA…FGAM), 223–243 (LMGT…GTIT), 290–310 (VVGL…AIYL), 332–352 (TLLA…GSGF), and 353–373 (IVLA…LALI). The segment at 415 to 439 (LNGQTAEEASAPQALPDRMESRIHH) is disordered.

Belongs to the dicarboxylate/amino acid:cation symporter (DAACS) (TC 2.A.23) family.

The protein resides in the cell inner membrane. Responsible for the transport of dicarboxylates such as succinate, fumarate, and malate from the periplasm across the membrane. The chain is C4-dicarboxylate transport protein from Verminephrobacter eiseniae (strain EF01-2).